The chain runs to 197 residues: Lipid A acyltransferase PagP (197 aa).

The signal sequence occupies residues 1-24 (MMFFKRTILACTVALLFPALPSYA). Active-site residues include His69, Asp112, and Ser113.

It belongs to the lipid A palmitoyltransferase family. As to quaternary structure, homodimer.

The protein resides in the cell outer membrane. The enzyme catalyses a lipid A + a 1,2-diacyl-sn-glycero-3-phosphocholine = a hepta-acyl lipid A + a 2-acyl-sn-glycero-3-phosphocholine. It catalyses the reaction a lipid IVA + a 1,2-diacyl-sn-glycero-3-phosphocholine = a lipid IVB + a 2-acyl-sn-glycero-3-phosphocholine. It carries out the reaction a lipid IIA + a 1,2-diacyl-sn-glycero-3-phosphocholine = a lipid IIB + a 2-acyl-sn-glycero-3-phosphocholine. Transfers a fatty acid residue from the sn-1 position of a phospholipid to the N-linked hydroxyfatty acid chain on the proximal unit of lipid A or its precursors. In Serratia proteamaculans (strain 568), this protein is Lipid A acyltransferase PagP.